A 154-amino-acid polypeptide reads, in one-letter code: Lipoprotein signal peptidase (154 aa).

A run of 2 helical transmembrane segments spans residues glycine 55–isoleucine 75 and alanine 85–phenylalanine 105. Active-site residues include aspartate 111 and aspartate 129. Residues valine 127 to alanine 147 traverse the membrane as a helical segment.

Belongs to the peptidase A8 family.

The protein resides in the cell membrane. It carries out the reaction Release of signal peptides from bacterial membrane prolipoproteins. Hydrolyzes -Xaa-Yaa-Zaa-|-(S,diacylglyceryl)Cys-, in which Xaa is hydrophobic (preferably Leu), and Yaa (Ala or Ser) and Zaa (Gly or Ala) have small, neutral side chains.. It participates in protein modification; lipoprotein biosynthesis (signal peptide cleavage). This protein specifically catalyzes the removal of signal peptides from prolipoproteins. The polypeptide is Lipoprotein signal peptidase (Geobacillus kaustophilus (strain HTA426)).